We begin with the raw amino-acid sequence, 259 residues long: MKIGMFDSGVGGLTVLKSVRKVYDKVDIVYLGDTARVPYGIKSKETIITYAKESANFLINQNVDVILIACNSVSANAMEALQEMFDIPIVGVIEAGVEAALKSSKTKHVGIIGTSATINSNKYQERLEAFNIKTYAKACPLFVPIVEEKLINTDISKKAVEFYLKEFKDLKDIDTLILGCTHYPLLEEDIKAFLPHINLVSSSDAIISYINNIVKNEGNATTELYFTDISQNTSELVEYIMGQKYDLKYVNVESLALNC.

Residues 7-8 (DS) and 39-40 (YG) contribute to the substrate site. The active-site Proton donor/acceptor is Cys70. 71 to 72 (NS) is a substrate binding site. The active-site Proton donor/acceptor is Cys180. 181–182 (TH) serves as a coordination point for substrate.

It belongs to the aspartate/glutamate racemases family.

The catalysed reaction is L-glutamate = D-glutamate. Its pathway is cell wall biogenesis; peptidoglycan biosynthesis. Provides the (R)-glutamate required for cell wall biosynthesis. In Hydrogenobaculum sp. (strain Y04AAS1), this protein is Glutamate racemase.